The sequence spans 187 residues: Translation machinery-associated protein 22 (187 aa).

Residues 94–165 (VTIKRIERNK…EIEEFILEKY (72 aa)) form the SUI1 domain.

The protein belongs to the DENR family. In terms of assembly, interacts with the 40S ribosomal subunit.

It is found in the cytoplasm. The protein is Translation machinery-associated protein 22 (tma-22) of Neurospora crassa (strain ATCC 24698 / 74-OR23-1A / CBS 708.71 / DSM 1257 / FGSC 987).